The sequence spans 362 residues: 3-dehydroquinate synthase (362 aa).

NAD(+) contacts are provided by residues 72 to 77 (DGEQYK), 106 to 110 (GVVGD), 130 to 131 (TT), Lys143, Lys152, and 170 to 173 (CLKT). 3 residues coordinate Zn(2+): Glu185, His248, and His265.

It belongs to the sugar phosphate cyclases superfamily. Dehydroquinate synthase family. Co(2+) is required as a cofactor. Requires Zn(2+) as cofactor. NAD(+) serves as cofactor.

The protein resides in the cytoplasm. It catalyses the reaction 7-phospho-2-dehydro-3-deoxy-D-arabino-heptonate = 3-dehydroquinate + phosphate. It functions in the pathway metabolic intermediate biosynthesis; chorismate biosynthesis; chorismate from D-erythrose 4-phosphate and phosphoenolpyruvate: step 2/7. In terms of biological role, catalyzes the conversion of 3-deoxy-D-arabino-heptulosonate 7-phosphate (DAHP) to dehydroquinate (DHQ). The chain is 3-dehydroquinate synthase from Aliivibrio salmonicida (strain LFI1238) (Vibrio salmonicida (strain LFI1238)).